A 250-amino-acid chain; its full sequence is Prophage antitermination protein Q homolog QuuQ (250 aa).

The protein belongs to the phage antitermination Q type 2 family.

In terms of biological role, positively regulate expression of some phage genes. Bacterial host RNA polymerase modified by antitermination proteins transcribes through termination sites that otherwise prevent expression of the regulated genes. This is Prophage antitermination protein Q homolog QuuQ (quuQ) from Escherichia coli (strain K12).